The sequence spans 124 residues: Ribonuclease pancreatic (124 aa).

Basic and acidic residues predominate over residues 1–13; sequence SETAAEKFERQHM. Residues 1-23 are disordered; sequence SETAAEKFERQHMDSYSSSSSNS. Residues Lys-7 and Arg-10 each contribute to the substrate site. Residue His-12 is the Proton acceptor of the active site. Disulfide bonds link Cys-26/Cys-84, Cys-40/Cys-95, Cys-58/Cys-110, and Cys-65/Cys-72. Substrate-binding positions include 41 to 45, Lys-66, and Arg-85; that span reads KPVNT. His-119 serves as the catalytic Proton donor.

Belongs to the pancreatic ribonuclease family. As to quaternary structure, monomer. Interacts with and forms tight 1:1 complexes with RNH1. Dimerization of two such complexes may occur. Interaction with RNH1 inhibits this protein. Pancreas.

The protein resides in the secreted. It catalyses the reaction an [RNA] containing cytidine + H2O = an [RNA]-3'-cytidine-3'-phosphate + a 5'-hydroxy-ribonucleotide-3'-[RNA].. The catalysed reaction is an [RNA] containing uridine + H2O = an [RNA]-3'-uridine-3'-phosphate + a 5'-hydroxy-ribonucleotide-3'-[RNA].. Its function is as follows. Endonuclease that catalyzes the cleavage of RNA on the 3' side of pyrimidine nucleotides. Acts on single-stranded and double-stranded RNA. The sequence is that of Ribonuclease pancreatic (RNASE1) from Camelus bactrianus (Bactrian camel).